A 507-amino-acid chain; its full sequence is Histidine ammonia-lyase (507 aa).

The segment at residues 141–143 is a cross-link (5-imidazolinone (Ala-Gly)); sequence ASG. Residue Ser-142 is modified to 2,3-didehydroalanine (Ser).

This sequence belongs to the PAL/histidase family. Post-translationally, contains an active site 4-methylidene-imidazol-5-one (MIO), which is formed autocatalytically by cyclization and dehydration of residues Ala-Ser-Gly.

Its subcellular location is the cytoplasm. It carries out the reaction L-histidine = trans-urocanate + NH4(+). It functions in the pathway amino-acid degradation; L-histidine degradation into L-glutamate; N-formimidoyl-L-glutamate from L-histidine: step 1/3. In Cereibacter sphaeroides (strain ATCC 17029 / ATH 2.4.9) (Rhodobacter sphaeroides), this protein is Histidine ammonia-lyase.